We begin with the raw amino-acid sequence, 387 residues long: 3-ketoacyl-CoA thiolase (387 aa).

The active-site Acyl-thioester intermediate is the Cys91. Catalysis depends on proton acceptor residues His343 and Cys373.

The protein belongs to the thiolase-like superfamily. Thiolase family. Heterotetramer of two alpha chains (FadB) and two beta chains (FadA).

It is found in the cytoplasm. It carries out the reaction an acyl-CoA + acetyl-CoA = a 3-oxoacyl-CoA + CoA. It functions in the pathway lipid metabolism; fatty acid beta-oxidation. Functionally, catalyzes the final step of fatty acid oxidation in which acetyl-CoA is released and the CoA ester of a fatty acid two carbons shorter is formed. The chain is 3-ketoacyl-CoA thiolase from Pectobacterium carotovorum subsp. carotovorum (strain PC1).